The sequence spans 178 residues: Large ribosomal subunit protein uL6 (178 aa).

It belongs to the universal ribosomal protein uL6 family. As to quaternary structure, part of the 50S ribosomal subunit.

Its function is as follows. This protein binds to the 23S rRNA, and is important in its secondary structure. It is located near the subunit interface in the base of the L7/L12 stalk, and near the tRNA binding site of the peptidyltransferase center. In Francisella philomiragia subsp. philomiragia (strain ATCC 25017 / CCUG 19701 / FSC 153 / O#319-036), this protein is Large ribosomal subunit protein uL6.